We begin with the raw amino-acid sequence, 297 residues long: MATH domain and coiled-coil domain-containing protein At2g05420 (297 aa).

Positions 7 to 139 constitute an MATH domain; the sequence is SKTITWVIEN…NGELTLVAKV (133 aa). Residues 239-281 adopt a coiled-coil conformation; that stretch reads KLDWLEKKHGEIKEKKKKEEASLKRLQEMEKQIFNEAQIYKEK.

The protein is MATH domain and coiled-coil domain-containing protein At2g05420 of Arabidopsis thaliana (Mouse-ear cress).